The following is a 425-amino-acid chain: MKTPSQTHVLGLAHPPLPMVRLAFIGLGNRGVLTLQRYLQIEGVEIKALCEIREGNLVKAQKILREAGYPQPDGYTGPDGWKRMCERDDIDLVFICTDWLTHTPMAVYSMEHGKHVAIEVPAAMTVEECWKLVDTAEKTRQHCMMLENCCYDPFALTTLNMAQQGVFGEITHVEGAYIHDLRSIYFADESKGGFHNHWGKKYSIEHTGNPYPTHGLGPVCQILNIHRGDRMNYLVSLSSLQAGMTEYARKNFGADSPEARQKYLLGDMNTTLIQTVKGKSIMIQYNVVTPRPYSRLHTVCGTKGFAQKYPVPSIALEPDAGSPLEGKALEEIMERYKHPFTATFGTEAHRRNLPNEMNYVMDCRLIYCLRNGLPLDMDVYDAAEWSCITELSEQSVLNGSIPVEIPDFTRGAWKKCHISRTSDLY.

NAD(+) is bound by residues 29–30, Glu-51, 99–102, 119–120, and Asn-148; these read NR, WLTH, and EV. Tyr-177 provides a ligand contact to substrate. NAD(+) contacts are provided by residues 194–198 and Tyr-211; that span reads FHNHW. Substrate-binding positions include 211–214 and Tyr-293; that span reads YPTH.

Belongs to the Gfo/Idh/MocA family. Glycosyl hydrolase 109 subfamily. NAD(+) serves as cofactor.

The catalysed reaction is Cleavage of non-reducing alpha-(1-&gt;3)-N-acetylgalactosamine residues from human blood group A and AB mucin glycoproteins, Forssman hapten and blood group A lacto series glycolipids.. In terms of biological role, glycosidase that has specific alpha-N-acetylgalactosaminidase activity. The polypeptide is Alpha-N-acetylgalactosaminidase (Bacteroides fragilis (strain ATCC 25285 / DSM 2151 / CCUG 4856 / JCM 11019 / LMG 10263 / NCTC 9343 / Onslow / VPI 2553 / EN-2)).